The following is a 180-amino-acid chain: Fanconi anemia core complex-associated protein 20 (180 aa).

Over residues 1–17 the composition is skewed to basic residues; that stretch reads MEAARRPRLGLSRRRPR. 2 disordered regions span residues 1–28 and 106–135; these read MEAA…GRPW and GAGG…VEQQ. Phosphoserine is present on residues serine 113 and serine 137. A UBZ2-type zinc finger spans residues 144–180; the sequence is LRSCPMCQKEFAPRLTQLDVDSHLAQCLAESTEDVTW. Zn(2+) is bound by residues cysteine 147, cysteine 150, histidine 166, and cysteine 170.

Component of the Fanconi anemia (FA) complex. Interacts with FANCA; interaction is direct. Interacts with REV1. Reported to bind monoubiquitinated REV1; however it binds better to non-ubiquitinated REV1.

The protein resides in the nucleus. It is found in the chromosome. In terms of biological role, component of the Fanconi anemia (FA) complex required to recruit the FA complex to DNA interstrand cross-links (ICLs) and promote ICLs repair. Following DNA damage recognizes and binds 'Lys-63'-linked ubiquitin generated by RNF8 at ICLs and recruits other components of the FA complex. Promotes translesion synthesis via interaction with REV1. This is Fanconi anemia core complex-associated protein 20 from Homo sapiens (Human).